We begin with the raw amino-acid sequence, 97 residues long: Aspartyl/glutamyl-tRNA(Asn/Gln) amidotransferase subunit C (97 aa).

This sequence belongs to the GatC family. In terms of assembly, heterotrimer of A, B and C subunits.

It carries out the reaction L-glutamyl-tRNA(Gln) + L-glutamine + ATP + H2O = L-glutaminyl-tRNA(Gln) + L-glutamate + ADP + phosphate + H(+). It catalyses the reaction L-aspartyl-tRNA(Asn) + L-glutamine + ATP + H2O = L-asparaginyl-tRNA(Asn) + L-glutamate + ADP + phosphate + 2 H(+). Functionally, allows the formation of correctly charged Asn-tRNA(Asn) or Gln-tRNA(Gln) through the transamidation of misacylated Asp-tRNA(Asn) or Glu-tRNA(Gln) in organisms which lack either or both of asparaginyl-tRNA or glutaminyl-tRNA synthetases. The reaction takes place in the presence of glutamine and ATP through an activated phospho-Asp-tRNA(Asn) or phospho-Glu-tRNA(Gln). In Roseiflexus sp. (strain RS-1), this protein is Aspartyl/glutamyl-tRNA(Asn/Gln) amidotransferase subunit C.